A 468-amino-acid polypeptide reads, in one-letter code: MTLVKYACDYCRVRRVKCDGKKPCSRCIEHNFDCTYQQPLKKRGSKPIGTRSLKYIPKAKMFIDNKSCTAAAEILMKVPKKVIDQCLRLYHDNLYVIWPLLSYDDLHKLLDEEYNDHYVYWFLVALSAANLSDLQSELESEGGFSFTGKQLAVLCMSSRQQFDDLSGRDIFRIMTYYCLLRCFSQSSDVRNSYRLCREAIGLVIVAGLHREKAYESLSFREQQLLRKVYYLLLLTERYYSVYVHCVTSLDTTIAPPQPEFVTDPRLSLDSFFEMIRVFTVPGKCFFDALATESTSGSCTEDSLKKIWKELHTASLEIEPWSYGYVDISFSRHWIRALAWKLVFQMNGTKFFSNANNAHILVEIAKDMLDDIFLTPNNLYDVHGPGIPMKSLEVANALVDIVNKYDHNMKLEAWNILCDVSKFVFSLKHCNHKMFQRFSTKCQSALIDLPISRPLRLNDDSKDEDDIIP.

A DNA-binding region (zn(2)-C6 fungal-type) is located at residues 8–34; that stretch reads CDYCRVRRVKCDGKKPCSRCIEHNFDC. Residues 41 to 49 carry the Nuclear localization signal motif; it reads KKRGSKPIG.

It belongs to the MAL13 family.

It is found in the nucleus. Functionally, regulates the coordinate transcription of structural MAL3S (maltase) and MAL3T (maltose permease) genes. The protein is Maltose fermentation regulatory protein MAL33 (MAL33) of Saccharomyces cerevisiae (strain ATCC 204508 / S288c) (Baker's yeast).